A 216-amino-acid polypeptide reads, in one-letter code: Superoxide dismutase [Cu-Zn], chloroplastic (216 aa).

The N-terminal 62 residues, 1–62 (MACHSALAAV…ASPRSMVVVA (62 aa)), are a transit peptide targeting the chloroplast. Residues H108, H110, and H125 each coordinate Cu cation. A disulfide bridge connects residues C119 and C208. H125, H133, H142, and D145 together coordinate Zn(2+). H182 provides a ligand contact to Cu cation.

It belongs to the Cu-Zn superoxide dismutase family. Homotetramer. Cu cation is required as a cofactor. The cofactor is Zn(2+).

It localises to the plastid. Its subcellular location is the chloroplast. The catalysed reaction is 2 superoxide + 2 H(+) = H2O2 + O2. Its function is as follows. Destroys radicals which are normally produced within the cells and which are toxic to biological systems. The sequence is that of Superoxide dismutase [Cu-Zn], chloroplastic (SODCP) from Zantedeschia aethiopica (White calla lily).